The primary structure comprises 117 residues: Probable non-functional immunoglobulin heavy variable 3-16 (117 aa).

A signal peptide spans 1–19 (MEFGLSWVFLAGILKGVQC). Residues 20 to 44 (EVQLVESGGGLVQPGGSLRLSCAAS) form a framework-1 region. The Ig-like domain occupies 21–117 (VQLVESGGGL…EDMAVYYCVR (97 aa)). Residues cysteine 41 and cysteine 115 are joined by a disulfide bond. Residues 45 to 52 (GFTFSNSD) are complementarity-determining-1. Residues 53 to 69 (MNWARKAPGKGLEWVSG) form a framework-2 region. Residues 70-77 (VSWNGSRT) are complementarity-determining-2. N-linked (GlcNAc...) asparagine glycosylation is present at asparagine 73. Residues 78–115 (HYVDSVKRRFIISRDNSRNSLYLQKNRRRAEDMAVYYC) form a framework-3 region. Positions 116–117 (VR) are complementarity-determining-3.

Immunoglobulins are composed of two identical heavy chains and two identical light chains; disulfide-linked.

The protein localises to the secreted. It localises to the cell membrane. In terms of biological role, probable non-functional open reading frame (ORF) of V region of the variable domain of immunoglobulin heavy chains. Non-functional ORF generally cannot participate in the synthesis of a productive immunoglobulin chain due to altered V-(D)-J or switch recombination and/or splicing site (at mRNA level) and/or conserved amino acid change (protein level). Immunoglobulins, also known as antibodies, are membrane-bound or secreted glycoproteins produced by B lymphocytes. In the recognition phase of humoral immunity, the membrane-bound immunoglobulins serve as receptors which, upon binding of a specific antigen, trigger the clonal expansion and differentiation of B lymphocytes into immunoglobulins-secreting plasma cells. Secreted immunoglobulins mediate the effector phase of humoral immunity, which results in the elimination of bound antigens. The antigen binding site is formed by the variable domain of one heavy chain, together with that of its associated light chain. Thus, each immunoglobulin has two antigen binding sites with remarkable affinity for a particular antigen. The variable domains are assembled by a process called V-(D)-J rearrangement and can then be subjected to somatic hypermutations which, after exposure to antigen and selection, allow affinity maturation for a particular antigen. The chain is Probable non-functional immunoglobulin heavy variable 3-16 from Homo sapiens (Human).